Consider the following 61-residue polypeptide: Temporin-SN3 (61 aa).

Positions methionine 1–cysteine 22 are cleaved as a signal peptide. A propeptide spans glutamate 23–lysine 44 (removed in mature form). Lysine 61 carries the lysine amide modification.

It belongs to the frog skin active peptide (FSAP) family. Temporin subfamily. As to expression, expressed by the skin glands.

It is found in the secreted. In terms of biological role, antimicrobial peptide. Active against some Gram-positive and Gram-negative bacterial strains. Active against fungus C.glabrata 090902 but not against C.albicans ATCC 12231. Shows weak hemolytic activity against human erythrocytes. This Sylvirana spinulosa (Fine-spined frog) protein is Temporin-SN3.